Here is a 1021-residue protein sequence, read N- to C-terminus: Putative 115 kDa protein in type-1 retrotransposable element R1DM (1021 aa).

In terms of domain architecture, Reverse transcriptase spans 479–741; the sequence is RCIRLGYFPA…RSCRYLGITV (263 aa). Positions 955–971 are gag-like cysteine motif; it reads CACGDPYEDWMHILCAC.

The protein is Putative 115 kDa protein in type-1 retrotransposable element R1DM (R1A1-element\ORF2) of Drosophila melanogaster (Fruit fly).